The chain runs to 853 residues: ATP-dependent zinc metalloprotease FtsH (853 aa).

Over 1–5 (MKNKK) the chain is Cytoplasmic. The chain crosses the membrane as a helical span at residues 6-26 (YLQFGGIAAVILIVLFLVSLF). The Extracellular segment spans residues 27–113 (SSDTRNFQEV…SYTTNVTQES (87 aa)). Residues 114-134 (FLMSMLSFILPMVIIFGLLMF) form a helical membrane-spanning segment. The Cytoplasmic portion of the chain corresponds to 135–853 (FLTRMQGGGM…NPENEGDNRG (719 aa)). 205 to 212 (GPPGTGKT) contributes to the ATP binding site. Residue histidine 427 participates in Zn(2+) binding. Glutamate 428 is an active-site residue. Residues histidine 431 and aspartate 503 each coordinate Zn(2+). Basic and acidic residues-rich tracts occupy residues 619–632 (ESTR…REPV) and 639–648 (ALERGEEPPK). The disordered stretch occupies residues 619 to 853 (ESTRFPRQEN…NPENEGDNRG (235 aa)). A compositionally biased stretch (low complexity) spans 677–695 (PASSAGVAPAAGAAAGSYG). Composition is skewed to polar residues over residues 728–739 (TPAQAPEQSPDS) and 770–788 (MDQS…QESP). The segment covering 796–813 (LPDHERSDYPEKAQKESV) has biased composition (basic and acidic residues).

This sequence in the central section; belongs to the AAA ATPase family. The protein in the C-terminal section; belongs to the peptidase M41 family. In terms of assembly, homohexamer. Requires Zn(2+) as cofactor.

It is found in the cell membrane. In terms of biological role, acts as a processive, ATP-dependent zinc metallopeptidase for both cytoplasmic and membrane proteins. Plays a role in the quality control of integral membrane proteins. This is ATP-dependent zinc metalloprotease FtsH from Corynebacterium glutamicum (strain ATCC 13032 / DSM 20300 / JCM 1318 / BCRC 11384 / CCUG 27702 / LMG 3730 / NBRC 12168 / NCIMB 10025 / NRRL B-2784 / 534).